Here is a 378-residue protein sequence, read N- to C-terminus: 1-acyl-sn-glycerol-3-phosphate acyltransferase delta (378 aa).

The helical transmembrane segment at 11–31 (FLCHLVFCYVFIASGLIINTV) threads the bilayer. An HXXXXD motif motif is present at residues 96–101 (HKFEID). Helical transmembrane passes span 125 to 145 (ELAY…VFCS), 307 to 327 (TLVN…QFLV), and 338 to 358 (LASF…MIGV).

The protein belongs to the 1-acyl-sn-glycerol-3-phosphate acyltransferase family.

The protein resides in the endoplasmic reticulum membrane. The catalysed reaction is a 1-acyl-sn-glycero-3-phosphate + an acyl-CoA = a 1,2-diacyl-sn-glycero-3-phosphate + CoA. The enzyme catalyses (4Z,7Z,10Z,13Z,16Z,19Z)-docosahexaenoyl-CoA + 1-hexadecanoyl-sn-glycero-3-phosphate = 1-hexadecanoyl-2-(4Z,7Z,10Z,13Z,16Z,19Z-docosahexaenoyl)-sn-glycero-3-phosphate + CoA. It carries out the reaction 1-octadecanoyl-sn-glycero-3-phosphate + (9Z,12Z)-octadecadienoyl-CoA = 1-octadecanoyl-2-(9Z,12Z-octadecadienoyl)-sn-glycero-3-phosphate + CoA. It catalyses the reaction 1-octadecanoyl-sn-glycero-3-phosphate + (4Z,7Z,10Z,13Z,16Z,19Z)-docosahexaenoyl-CoA = 1-octadecanoyl-2-(4Z,7Z,10Z,13Z,16Z,19Z-docosahexaenoyl)-sn-glycero-3-phosphate + CoA. The catalysed reaction is (4Z,7Z,10Z,13Z,16Z,19Z)-docosahexaenoyl-CoA + 1-(9Z-octadecenoyl)-sn-glycero-3-phosphate = 1-(9Z-octadecenoyl)-2-(4Z,7Z,10Z,13Z,16Z,19Z-docosahexaenoyl)-sn-glycero-3-phosphate + CoA. It functions in the pathway phospholipid metabolism; CDP-diacylglycerol biosynthesis; CDP-diacylglycerol from sn-glycerol 3-phosphate: step 2/3. Its function is as follows. Converts 1-acyl-sn-glycerol-3-phosphate (lysophosphatidic acid or LPA) into 1,2-diacyl-sn-glycerol-3-phosphate (phosphatidic acid or PA) by incorporating an acyl moiety at the sn-2 position of the glycerol backbone. Exhibits high acyl-CoA specificity for polyunsaturated fatty acyl-CoA, especially docosahexaenoyl-CoA (22:6-CoA, DHA-CoA). The sequence is that of 1-acyl-sn-glycerol-3-phosphate acyltransferase delta (AGPAT4) from Macaca fascicularis (Crab-eating macaque).